Here is a 1463-residue protein sequence, read N- to C-terminus: Kinesin-like protein KIF15 (1463 aa).

Positions Ala-18–Ile-354 constitute a Kinesin motor domain. Position 99–106 (Gly-99–Thr-106) interacts with ATP. A disordered region spans residues Ala-387–Ser-424. The segment covering Ser-398–Val-414 has biased composition (polar residues). Positions Ser-415–Ser-424 are enriched in low complexity. 2 coiled-coil regions span residues Ser-436–Asn-517 and Thr-586–Lys-646. 3 disordered regions span residues Ala-686–Ile-720, Phe-1335–Thr-1356, and Gln-1409–Ala-1444. A compositionally biased stretch (polar residues) spans Asp-701–Pro-715. Over residues Glu-1418–Gln-1428 the composition is skewed to basic and acidic residues.

This sequence belongs to the TRAFAC class myosin-kinesin ATPase superfamily. Kinesin family. KLP2 subfamily. As to quaternary structure, homodimer.

Its subcellular location is the cytoplasm. It localises to the cytoskeleton. The protein resides in the spindle. In terms of biological role, plus-end directed kinesin-like motor enzyme involved in mitotic spindle assembly. Plays a role in positioning spindle poles during mitosis, specifically at prometaphase. The protein is Kinesin-like protein KIF15 (KIF15) of Strongylocentrotus purpuratus (Purple sea urchin).